Reading from the N-terminus, the 462-residue chain is Zinc finger CCCH domain-containing protein 34 (462 aa).

Residues 1-13 (MERYGRPGEEGSR) are compositionally biased toward basic and acidic residues. The segment at 1–26 (MERYGRPGEEGSRSDPSLEWTSHGGE) is disordered. 3 consecutive C3H1-type zinc fingers follow at residues 54–82 (RPDE…HPRD), 100–128 (RMGH…HPRQ), and 148–176 (RPGE…HPVP). Residues 288-303 (TGTYQSVPSSNSTSKE) are compositionally biased toward polar residues. Residues 288-310 (TGTYQSVPSSNSTSKEFPQRPDQ) are disordered. 2 consecutive C3H1-type zinc fingers follow at residues 307–335 (RPDQ…HPVD) and 353–381 (RPGV…HSMS). Residues 405–418 (SSSLSGSSAPVSSS) show a composition bias toward low complexity. The segment at 405–462 (SSSLSGSSAPVSSSNEPTKEAVTPAVSSMVSGLSRPEPAETSGDSASVSGSIEAKTSS) is disordered. Over residues 446–462 (SGDSASVSGSIEAKTSS) the composition is skewed to polar residues.

It localises to the nucleus. The sequence is that of Zinc finger CCCH domain-containing protein 34 from Arabidopsis thaliana (Mouse-ear cress).